Here is a 669-residue protein sequence, read N- to C-terminus: DNA ligase (669 aa).

NAD(+)-binding positions include aspartate 34–aspartate 38, serine 83–leucine 84, and glutamate 114. The active-site N6-AMP-lysine intermediate is lysine 116. Positions 137, 171, 287, and 311 each coordinate NAD(+). Zn(2+) contacts are provided by cysteine 405, cysteine 408, cysteine 423, and cysteine 428. Residues asparagine 591–lysine 669 form the BRCT domain.

It belongs to the NAD-dependent DNA ligase family. LigA subfamily. It depends on Mg(2+) as a cofactor. Mn(2+) is required as a cofactor.

It catalyses the reaction NAD(+) + (deoxyribonucleotide)n-3'-hydroxyl + 5'-phospho-(deoxyribonucleotide)m = (deoxyribonucleotide)n+m + AMP + beta-nicotinamide D-nucleotide.. Functionally, DNA ligase that catalyzes the formation of phosphodiester linkages between 5'-phosphoryl and 3'-hydroxyl groups in double-stranded DNA using NAD as a coenzyme and as the energy source for the reaction. It is essential for DNA replication and repair of damaged DNA. In Bacillus anthracis (strain A0248), this protein is DNA ligase.